Here is a 606-residue protein sequence, read N- to C-terminus: Mitogen-activated protein kinase kinase kinase 7 (606 aa).

Positions Met-1–Tyr-300 are interaction with MAPK8IP1. Residues Ile-36–Phe-291 form the Protein kinase domain. Residues Val-42 to Val-50 and Lys-63 contribute to the ATP site. A Glycyl lysine isopeptide (Lys-Gly) (interchain with G-Cter in ubiquitin) cross-link involves residue Lys-72. The active-site Proton acceptor is Asp-156. A Glycyl lysine isopeptide (Lys-Gly) (interchain with G-Cter in ubiquitin) cross-link involves residue Lys-158. Phosphothreonine; by autocatalysis is present on residues Thr-184 and Thr-187. Ser-192 is modified (phosphoserine; by autocatalysis). A Glycyl lysine isopeptide (Lys-Gly) (interchain with G-Cter in ubiquitin) cross-link involves residue Lys-209. Disordered regions lie at residues Pro-301–Val-338 and Lys-354–Asp-391. Positions Asp-306–Val-338 are enriched in polar residues. Residues Ser-361–Ser-375 are compositionally biased toward low complexity. Residues Ser-367, Ser-389, and Ser-439 each carry the phosphoserine modification. Polar residues predominate over residues Leu-443–Gln-452. Positions Leu-443–Asp-493 are disordered. Positions Val-453 to Arg-463 are enriched in low complexity. Residue Ser-455 is modified to Phosphoserine. Residues Met-464–Glu-473 show a composition bias toward polar residues.

The protein belongs to the protein kinase superfamily. STE Ser/Thr protein kinase family. MAP kinase kinase kinase subfamily. Can form homodimer. Binds both upstream activators and downstream substrates in multimolecular complexes. Interacts with TAB1/MAP3K7IP1, TAB2/MAP3K7IP2 and TAB3/MAP3K7IP3. Identified in the TRIKA2 complex composed of MAP3K7/TAK1, TAB1/MAP3K7IP1 and TAB2/MAP3K7IP2. Interacts with PPM1L and PPM1B/PP2CB. Interaction with PP2A and PPP6C leads to its repressed activity. Interacts with TRAF6 and TAB1/MAP3K7IP1; during IL-1 signaling. Interacts with TAOK1 and TAOK2; interaction with TAOK2 interferes with MAP3K7 interaction with IKKA, thus preventing NF-kappa-B activation. Interacts with DYNC2I2 (via WD domains). Interacts with CYLD and RBCK1. Interacts with TGFBR1; induces MAP3K7/TAK1 activation by TRAF6. Interacts with MAPK8IP1 and SMAD6. Interacts with isoform 1 of VRK2. Interacts with DAB2; the interaction is induced by TGF-beta stimulation and may mediate TGF-beta stimulated JNK activation. Interacts with TRIM5. Part of a complex containing ITCH, NDFIP1 and MAP3K7. Interacts with IFIT5; the interaction synergizes the recruitment of IKK to MAP3K7 and enhances IKK phosphorylation. Interacts with PLEKHM1 (via N- and C-terminus). Found in a complex with SH3RF1, RAC2, MAP2K7/MKK7, MAPK8IP1/JIP1, MAPK8/JNK1 and MAPK9/JNK2. Interacts with SASH1. Interacts with RIPK1. It depends on Mg(2+) as a cofactor. Post-translationally, association with TAB1/MAP3K7IP1 promotes autophosphorylation at Ser-192 and subsequent activation. Association with TAB2/MAP3K7IP2, itself associated with free unanchored Lys-63 polyubiquitin chain, promotes autophosphorylation and subsequent activation of MAP3K7. Dephosphorylation at Ser-192 by PPM1B/PP2CB and at Thr-187 by PP2A and PPP6C leads to inactivation. In terms of processing, 'Lys-48'-linked polyubiquitination at Lys-72 is induced by TNFalpha, and leads to proteasomal degradation. Undergoes 'Lys-48'-linked polyubiquitination catalyzed by ITCH. 'Lys-63'-linked polyubiquitination at Lys-158 by TRIM8 does not lead to proteasomal degradation but contributes to autophosphorylation and activation. Deubiquitinated by CYLD, a protease that selectively cleaves 'Lys-63'-linked ubiquitin chains. Deubiquitinated by USP19; leading to negative regulation of TNF-alpha- and IL-1beta-triggered NF-kappa-B activation.

It is found in the cytoplasm. Its subcellular location is the cell membrane. The enzyme catalyses L-seryl-[protein] + ATP = O-phospho-L-seryl-[protein] + ADP + H(+). It catalyses the reaction L-threonyl-[protein] + ATP = O-phospho-L-threonyl-[protein] + ADP + H(+). With respect to regulation, activated by pro-inflammatory cytokines and in response to physical and chemical stresses, including osmotic stress, oxidative stress, arsenic and ultraviolet light irradiation. Activated by 'Lys-63'-linked polyubiquitination and by autophosphorylation. Association with TAB1/MAP3K7IP1 and TAB2/MAP3K7IP2 promotes activation through autophosphorylation, whereas PPM1B/PP2CB, PP2A and PPP6C dephosphorylation leads to inactivation. Ceramides are also able to activate MAP3K7/TAK1. Functionally, serine/threonine kinase which acts as an essential component of the MAP kinase signal transduction pathway. Plays an important role in the cascades of cellular responses evoked by changes in the environment. Mediates signal transduction of TRAF6, various cytokines including interleukin-1 (IL-1), transforming growth factor-beta (TGFB), TGFB-related factors like BMP2 and BMP4, toll-like receptors (TLR), tumor necrosis factor receptor CD40 and B-cell receptor (BCR). Once activated, acts as an upstream activator of the MKK/JNK signal transduction cascade and the p38 MAPK signal transduction cascade through the phosphorylation and activation of several MAP kinase kinases like MAP2K1/MEK1, MAP2K3/MKK3, MAP2K6/MKK6 and MAP2K7/MKK7. These MAP2Ks in turn activate p38 MAPKs and c-jun N-terminal kinases (JNKs); both p38 MAPK and JNK pathways control the transcription factors activator protein-1 (AP-1). Independently of MAP2Ks and p38 MAPKs, acts as a key activator of NF-kappa-B by promoting activation of the I-kappa-B-kinase (IKK) core complex. Mechanistically, recruited to polyubiquitin chains of RIPK2 and IKBKG/NEMO via TAB2/MAP3K7IP2 and TAB3/MAP3K7IP3, and catalyzes phosphorylation and activation of IKBKB/IKKB component of the IKK complex, leading to NF-kappa-B activation. In osmotic stress signaling, plays a major role in the activation of MAPK8/JNK1, but not that of NF-kappa-B. Promotes TRIM5 capsid-specific restriction activity. Phosphorylates RIPK1 at 'Ser-321' which positively regulates RIPK1 interaction with RIPK3 to promote necroptosis but negatively regulates RIPK1 kinase activity and its interaction with FADD to mediate apoptosis. Phosphorylates STING1 in response to cGAMP-activation, promoting association between STEEP1 and STING1 and STING1 translocation to COPII vesicles. In Pongo abelii (Sumatran orangutan), this protein is Mitogen-activated protein kinase kinase kinase 7 (MAP3K7).